The primary structure comprises 491 residues: UDP-N-acetylmuramate--L-alanine ligase (491 aa).

126 to 132 serves as a coordination point for ATP; sequence GTHGKTT.

It belongs to the MurCDEF family.

Its subcellular location is the cytoplasm. It carries out the reaction UDP-N-acetyl-alpha-D-muramate + L-alanine + ATP = UDP-N-acetyl-alpha-D-muramoyl-L-alanine + ADP + phosphate + H(+). The protein operates within cell wall biogenesis; peptidoglycan biosynthesis. Cell wall formation. This is UDP-N-acetylmuramate--L-alanine ligase from Photorhabdus laumondii subsp. laumondii (strain DSM 15139 / CIP 105565 / TT01) (Photorhabdus luminescens subsp. laumondii).